A 600-amino-acid polypeptide reads, in one-letter code: Proline--tRNA ligase (600 aa).

Belongs to the class-II aminoacyl-tRNA synthetase family. ProS type 1 subfamily. In terms of assembly, homodimer.

The protein resides in the cytoplasm. It carries out the reaction tRNA(Pro) + L-proline + ATP = L-prolyl-tRNA(Pro) + AMP + diphosphate. Functionally, catalyzes the attachment of proline to tRNA(Pro) in a two-step reaction: proline is first activated by ATP to form Pro-AMP and then transferred to the acceptor end of tRNA(Pro). As ProRS can inadvertently accommodate and process non-cognate amino acids such as alanine and cysteine, to avoid such errors it has two additional distinct editing activities against alanine. One activity is designated as 'pretransfer' editing and involves the tRNA(Pro)-independent hydrolysis of activated Ala-AMP. The other activity is designated 'posttransfer' editing and involves deacylation of mischarged Ala-tRNA(Pro). The misacylated Cys-tRNA(Pro) is not edited by ProRS. The chain is Proline--tRNA ligase from Acaryochloris marina (strain MBIC 11017).